Reading from the N-terminus, the 484-residue chain is tRNA-2-methylthio-N(6)-dimethylallyladenosine synthase (484 aa).

The MTTase N-terminal domain occupies 36–153; sequence GKLYIKTHGC…LPELIRARRE (118 aa). The [4Fe-4S] cluster site is built by Cys45, Cys82, Cys116, Cys190, Cys194, and Cys197. One can recognise a Radical SAM core domain in the interval 176 to 415; the sequence is RAEGPSAFVS…HISAHAASIS (240 aa). A TRAM domain is found at 416 to 479; the sequence is QSMVGSVQRV…SNSLRGRIQL (64 aa). Residues 428 to 450 are disordered; it reads EGPSRRDPNELTGKSENMRPVNF.

This sequence belongs to the methylthiotransferase family. MiaB subfamily. As to quaternary structure, monomer. [4Fe-4S] cluster is required as a cofactor.

It localises to the cytoplasm. The catalysed reaction is N(6)-dimethylallyladenosine(37) in tRNA + (sulfur carrier)-SH + AH2 + 2 S-adenosyl-L-methionine = 2-methylsulfanyl-N(6)-dimethylallyladenosine(37) in tRNA + (sulfur carrier)-H + 5'-deoxyadenosine + L-methionine + A + S-adenosyl-L-homocysteine + 2 H(+). In terms of biological role, catalyzes the methylthiolation of N6-(dimethylallyl)adenosine (i(6)A), leading to the formation of 2-methylthio-N6-(dimethylallyl)adenosine (ms(2)i(6)A) at position 37 in tRNAs that read codons beginning with uridine. This is tRNA-2-methylthio-N(6)-dimethylallyladenosine synthase from Xanthomonas oryzae pv. oryzae (strain MAFF 311018).